A 221-amino-acid chain; its full sequence is Ras-related protein Rab-28 (221 aa).

Residue serine 2 is modified to N-acetylserine. Position 8 is a phosphoserine (serine 8). Positions 21, 24, 25, 26, 27, 38, 39, 41, and 44 each coordinate GTP. Position 26 (threonine 26) interacts with Mg(2+). A switch I region spans residues glutamate 35–phenylalanine 49. Mg(2+) contacts are provided by threonine 44 and aspartate 68. The interval aspartate 68 to glycine 85 is switch II. Glycine 71, asparagine 129, lysine 130, aspartate 132, alanine 160, and lysine 161 together coordinate GTP. The residue at position 218 (cysteine 218) is a Cysteine methyl ester. Cysteine 218 carries the S-farnesyl cysteine lipid modification. Positions alanine 219–glutamine 221 are cleaved as a propeptide — removed in mature form.

This sequence belongs to the small GTPase superfamily. Rab family. As to quaternary structure, interacts (prenylated form) with PDE6D; the interaction promotes RAB28 delivery to the photoreceptor outer segments. Interacts with KCNJ13; the interaction may facilitate cone outer segments phagocytosis. Interacts with RELA; the interaction contributes to RELA transport from cytoplasm to nucleus. It depends on Mg(2+) as a cofactor. Isoprenylated.

It localises to the cell membrane. The protein resides in the cytoplasm. Its subcellular location is the cytoskeleton. The protein localises to the cilium basal body. It is found in the nucleus. It carries out the reaction GTP + H2O = GDP + phosphate + H(+). Its activity is regulated as follows. Regulated by guanine nucleotide exchange factors (GEFs) which promote the exchange of bound GDP for free GTP. Regulated by GTPase activating proteins (GAPs) which increase the GTP hydrolysis activity. Inhibited by GDP dissociation inhibitors (GDIs). In terms of biological role, the small GTPases Rab are key regulators of intracellular membrane trafficking, from the formation of transport vesicles to their fusion with membranes. Rabs cycle between an inactive GDP-bound form and an active GTP-bound form that is able to recruit to membranes different sets of downstream effectors directly responsible for vesicle formation, movement, tethering and fusion. RAB28 is required for shedding and phagocytosis of cone cell outer segments (OS) discs in the retina. Also participates in nuclear factor kappa-B p65/RELA nuclear transport in endothelial cells. This Bos taurus (Bovine) protein is Ras-related protein Rab-28 (RAB28).